A 249-amino-acid polypeptide reads, in one-letter code: Enolase-phosphatase E1 (249 aa).

D9 and E11 together coordinate Mg(2+). Residues 137-138 (SS) and K177 each bind substrate. D204 is a Mg(2+) binding site.

It belongs to the HAD-like hydrolase superfamily. MasA/MtnC family. Monomer. Mg(2+) is required as a cofactor.

The protein localises to the cytoplasm. Its subcellular location is the nucleus. It carries out the reaction 5-methylsulfanyl-2,3-dioxopentyl phosphate + H2O = 1,2-dihydroxy-5-(methylsulfanyl)pent-1-en-3-one + phosphate. It functions in the pathway amino-acid biosynthesis; L-methionine biosynthesis via salvage pathway; L-methionine from S-methyl-5-thio-alpha-D-ribose 1-phosphate: step 3/6. Its pathway is amino-acid biosynthesis; L-methionine biosynthesis via salvage pathway; L-methionine from S-methyl-5-thio-alpha-D-ribose 1-phosphate: step 4/6. Functionally, bifunctional enzyme that catalyzes the enolization of 2,3-diketo-5-methylthiopentyl-1-phosphate (DK-MTP-1-P) into the intermediate 2-hydroxy-3-keto-5-methylthiopentenyl-1-phosphate (HK-MTPenyl-1-P), which is then dephosphorylated to form the acireductone 1,2-dihydroxy-3-keto-5-methylthiopentene (DHK-MTPene). The chain is Enolase-phosphatase E1 from Lodderomyces elongisporus (strain ATCC 11503 / CBS 2605 / JCM 1781 / NBRC 1676 / NRRL YB-4239) (Yeast).